The primary structure comprises 2209 residues: Orsellinic acid synthase armB (2209 aa).

Residues leucine 38 to histidine 261 form an N-terminal acylcarrier protein transacylase domain (SAT) region. A Ketosynthase family 3 (KS3) domain is found at glutamine 391–glutamate 817. Residues cysteine 561, histidine 696, and histidine 736 each act as for beta-ketoacyl synthase activity in the active site. A malonyl-CoA:ACP transacylase (MAT) domain region spans residues valine 914–glutamine 1239. Serine 1008 (for acyl/malonyl transferase activity) is an active-site residue. Positions methionine 1306–aspartate 1436 are N-terminal hotdog fold. Positions methionine 1306 to glutamine 1613 constitute a PKS/mFAS DH domain. Residues isoleucine 1335–asparagine 1610 are product template (PT) domain. Histidine 1338 acts as the Proton acceptor; for dehydratase activity in catalysis. The segment at alanine 1463–glutamine 1613 is C-terminal hotdog fold. The active-site Proton donor; for dehydratase activity is aspartate 1524. 2 Carrier domains span residues valine 1659–isoleucine 1734 and serine 1844–glutamine 1921. Serine 1693 and serine 1881 each carry O-(pantetheine 4'-phosphoryl)serine. Residues isoleucine 1917–leucine 1945 are disordered. Over residues alanine 1932–serine 1943 the composition is skewed to acidic residues. The thioesterase (TE) domain stretch occupies residues valine 1962 to aspartate 2201.

It catalyses the reaction 3 malonyl-CoA + acetyl-CoA + 2 H(+) = orsellinate + 3 CO2 + 4 CoA. It functions in the pathway secondary metabolite biosynthesis. Non-reducing polyketide synthase, part of the gene cluster that mediates the biosynthesis of melleolides, a range of antifungal and phytotoxic polyketide derivatives composed of an orsellinic acid (OA) moiety esterified to various sesquiterpene alcohols. The first step in melleolides biosynthesis is performed by the delta(6)-protoilludene synthase PRO1 which catalyzes the cyclization of farnesyl diphosphate to protoilludene. The orsellinic acid synthase armB produces OA by condensing acetyl-CoA with 3 malonyl-CoA units in a three-round chain elongation reaction folowed by a C2-C7 ring closure. ArmB further catalyzes the trans-esterification of OA to the various sesquiterpene alcohols resulting from the hydroxylation of protoilludene. The melleolides cluster also includes 5 cytochrome P450 monooxygenases, 4 NAD(+)-dependent oxidoreductases, one flavin-dependent oxidoreductase, and one O-methyltransferase. The cytochrome P450 monooxygenases may be involved in protoilludene hydroxylation to elaborate melleolides with multiple alcohol groups, such as melleolide D, which carries alcohol functionalities at C-4, C-5, C-10, and C-13. The role of the NAD(+)-dependent enzymes remains unknown. Numerous melleolides, including arnamial, show 5'-O-methylation of the aromatic moiety which may be catalyzed by the methyltransferase encoded in the cluster. The flavin-dependent oxidoreductase might represent the dehydrogenase yielding the aldehyde in position 1 of arnamial and other melleolides. Finally, several halogenase localized outside of the cluster (armH1 to armH5), are able to catalyze the transfer of a single chlorine atom to the melleolide backbone, resulting in a 6'-chloromelleolide product. This Armillaria mellea (Honey mushroom) protein is Orsellinic acid synthase armB.